The primary structure comprises 203 residues: Large ribosomal subunit protein bL25 (203 aa).

This sequence belongs to the bacterial ribosomal protein bL25 family. CTC subfamily. As to quaternary structure, part of the 50S ribosomal subunit; part of the 5S rRNA/L5/L18/L25 subcomplex. Contacts the 5S rRNA. Binds to the 5S rRNA independently of L5 and L18.

In terms of biological role, this is one of the proteins that binds to the 5S RNA in the ribosome where it forms part of the central protuberance. In Cereibacter sphaeroides (strain ATCC 17025 / ATH 2.4.3) (Rhodobacter sphaeroides), this protein is Large ribosomal subunit protein bL25.